Here is an 87-residue protein sequence, read N- to C-terminus: Class II metallothionein-like protein 1A (87 aa).

It belongs to the metallothionein superfamily. Type 15 family. Expressed in developing seeds.

In terms of biological role, metallothioneins have a high content of cysteine residues that bind various heavy metals. This Oryza sativa subsp. japonica (Rice) protein is Class II metallothionein-like protein 1A (MT21A).